The following is a 542-amino-acid chain: Phosphoenolpyruvate carboxykinase (ATP) (542 aa).

Substrate-binding residues include arginine 67, tyrosine 208, and lysine 214. ATP is bound by residues lysine 214, histidine 233, and 249–257 (GLSGTGKTT). Mn(2+) contacts are provided by lysine 214 and histidine 233. Position 270 (aspartate 270) interacts with Mn(2+). ATP-binding positions include glutamate 298, arginine 334, 450–451 (RI), and threonine 456. Residue arginine 334 participates in substrate binding.

The protein belongs to the phosphoenolpyruvate carboxykinase (ATP) family. In terms of assembly, monomer. The cofactor is Mn(2+).

Its subcellular location is the cytoplasm. The enzyme catalyses oxaloacetate + ATP = phosphoenolpyruvate + ADP + CO2. It functions in the pathway carbohydrate biosynthesis; gluconeogenesis. Its function is as follows. Involved in the gluconeogenesis. Catalyzes the conversion of oxaloacetate (OAA) to phosphoenolpyruvate (PEP) through direct phosphoryl transfer between the nucleoside triphosphate and OAA. The protein is Phosphoenolpyruvate carboxykinase (ATP) of Vibrio cholerae serotype O1 (strain ATCC 39541 / Classical Ogawa 395 / O395).